A 139-amino-acid polypeptide reads, in one-letter code: Maintenance of telomere capping protein 7 (139 aa).

2 helical membrane passes run 13–33 and 42–62; these read SHHVLFAEPGFFLCNFFFVLL and FYFLFILLFIIYIAIIYFVFI. The segment at 94–121 is disordered; it reads RSVANPALPPQKKKKKKKKGTLRTGEVE. Residues 104–114 show a composition bias toward basic residues; the sequence is QKKKKKKKKGT.

The protein localises to the membrane. Its function is as follows. May be involved in telomere capping. The polypeptide is Maintenance of telomere capping protein 7 (MTC7) (Saccharomyces cerevisiae (strain ATCC 204508 / S288c) (Baker's yeast)).